Reading from the N-terminus, the 373-residue chain is Autophagy-related protein 18 (373 aa).

Residues 142–163 (YPDSRDHEPRTEGESSSPNVSN) are disordered. Positions 144-154 (DSRDHEPRTEG) are enriched in basic and acidic residues. WD repeat units follow at residues 144-183 (DSRDHEPRTEGESSSPNVSNSAVSGQVILWDVINCKQITK), 186-226 (AHKD…RLYQ), and 231-270 (SLPAQIYSIAFHPDSSLLTVTSSTQTVHIFRLKEVYSNLE). Positions 227-231 (FRRGS) match the L/FRRG motif motif.

The protein belongs to the WD repeat PROPPIN family. As to quaternary structure, component of the PI(3,5)P2 regulatory complex. Interacts with atg5.

It is found in the preautophagosomal structure membrane. Its subcellular location is the vacuole membrane. The protein resides in the endosome membrane. Functionally, the PI(3,5)P2 regulatory complex regulates both the synthesis and turnover of phosphatidylinositol 3,5-bisphosphate (PtdIns(3,5)P2). Necessary for proper vacuole morphology. Plays an important role in osmotically-induced vacuole fragmentation. Required for cytoplasm to vacuole transport (Cvt) vesicle formation, pexophagy and starvation-induced autophagy. Involved in correct atg9 trafficking to the preautophagosomal structure. Might also be involved in premeiotic DNA replication. Required for the recruitment of the atg5-atg12/atg16 complex to the preautophagosomal structure. The polypeptide is Autophagy-related protein 18 (atg18) (Schizosaccharomyces pombe (strain 972 / ATCC 24843) (Fission yeast)).